The primary structure comprises 241 residues: tRNA pseudouridine synthase B (241 aa).

Asp45 (nucleophile) is an active-site residue.

It belongs to the pseudouridine synthase TruB family. Type 1 subfamily.

It catalyses the reaction uridine(55) in tRNA = pseudouridine(55) in tRNA. Responsible for synthesis of pseudouridine from uracil-55 in the psi GC loop of transfer RNAs. In Opitutus terrae (strain DSM 11246 / JCM 15787 / PB90-1), this protein is tRNA pseudouridine synthase B.